A 33-amino-acid chain; its full sequence is Zinc metalloproteinase-disintegrin-like moojenin (33 aa).

A Disintegrin domain is found at proline 8–glutamate 33. Residues valine 10, asparagine 13, leucine 15, glutamate 17, glutamate 20, and aspartate 23 each coordinate Ca(2+). Cystine bridges form between cysteine 11-cysteine 30 and cysteine 24-cysteine 30.

It belongs to the venom metalloproteinase (M12B) family. P-III subfamily. P-IIIb sub-subfamily. In terms of assembly, monomer. It depends on Zn(2+) as a cofactor. Post-translationally, the N-terminus (from the N-terminal region of the metalloproteinase domain) is blocked. In terms of tissue distribution, expressed by the venom gland.

The protein resides in the secreted. With respect to regulation, the fibrinogenolytic and coagulant activities of the moojenin were abolished by preincubation with EDTA, 1,10-phenanthroline and beta-mercaptoethanol. Functionally, metalloproteinase moojenin: snake venom metalloproteinase that cleaves both alpha- and beta-chains of fibrinogen, but not the gamma-chain. Shows a coagulant activity on bovine plasma about 3.1 fold lower than crude venom. Renders the blood incoagulable when intraperitoneally administered into mice. Induces necrosis in liver and muscle, but does not cause histological alterations in mouse lungs, kidney or heart. This Bothrops moojeni (Lance-headed viper) protein is Zinc metalloproteinase-disintegrin-like moojenin.